Here is a 129-residue protein sequence, read N- to C-terminus: uncharacterized protein (129 aa).

Transmembrane regions (helical) follow at residues 35–55 (IVDGAFGPVSLLFWLLGWKIP) and 98–118 (ILLLNALCFRVKILLCAIILL).

It localises to the membrane. This is an uncharacterized protein from Saccharomyces cerevisiae (strain ATCC 204508 / S288c) (Baker's yeast).